Consider the following 698-residue polypeptide: Elongation factor G (698 aa).

The 277-residue stretch at 8 to 284 (ANVRNIGIMA…AVVDFLPSPL (277 aa)) folds into the tr-type G domain. Residues 17–24 (AHIDAGKT), 81–85 (DTPGH), and 135–138 (NKLD) each bind GTP. The segment at 289–309 (IEGTGTDGETPLQRKPSTSEP) is disordered.

This sequence belongs to the TRAFAC class translation factor GTPase superfamily. Classic translation factor GTPase family. EF-G/EF-2 subfamily.

The protein localises to the cytoplasm. Functionally, catalyzes the GTP-dependent ribosomal translocation step during translation elongation. During this step, the ribosome changes from the pre-translocational (PRE) to the post-translocational (POST) state as the newly formed A-site-bound peptidyl-tRNA and P-site-bound deacylated tRNA move to the P and E sites, respectively. Catalyzes the coordinated movement of the two tRNA molecules, the mRNA and conformational changes in the ribosome. The chain is Elongation factor G from Salinispora arenicola (strain CNS-205).